Here is a 225-residue protein sequence, read N- to C-terminus: Phosphoribosylformylglycinamidine synthase subunit PurQ (225 aa).

The Glutamine amidotransferase type-1 domain maps to 5 to 225; it reads RFGIVVFPGS…WQSIVQSLAG (221 aa). Cys89 (nucleophile) is an active-site residue. Active-site residues include His198 and Glu200.

Part of the FGAM synthase complex composed of 1 PurL, 1 PurQ and 2 PurS subunits.

Its subcellular location is the cytoplasm. It carries out the reaction N(2)-formyl-N(1)-(5-phospho-beta-D-ribosyl)glycinamide + L-glutamine + ATP + H2O = 2-formamido-N(1)-(5-O-phospho-beta-D-ribosyl)acetamidine + L-glutamate + ADP + phosphate + H(+). The enzyme catalyses L-glutamine + H2O = L-glutamate + NH4(+). Its pathway is purine metabolism; IMP biosynthesis via de novo pathway; 5-amino-1-(5-phospho-D-ribosyl)imidazole from N(2)-formyl-N(1)-(5-phospho-D-ribosyl)glycinamide: step 1/2. Functionally, part of the phosphoribosylformylglycinamidine synthase complex involved in the purines biosynthetic pathway. Catalyzes the ATP-dependent conversion of formylglycinamide ribonucleotide (FGAR) and glutamine to yield formylglycinamidine ribonucleotide (FGAM) and glutamate. The FGAM synthase complex is composed of three subunits. PurQ produces an ammonia molecule by converting glutamine to glutamate. PurL transfers the ammonia molecule to FGAR to form FGAM in an ATP-dependent manner. PurS interacts with PurQ and PurL and is thought to assist in the transfer of the ammonia molecule from PurQ to PurL. This is Phosphoribosylformylglycinamidine synthase subunit PurQ from Synechococcus sp. (strain JA-3-3Ab) (Cyanobacteria bacterium Yellowstone A-Prime).